We begin with the raw amino-acid sequence, 350 residues long: Integrin beta-1-binding protein 2 (350 aa).

4 residues coordinate Zn(2+): Cys-5, Cys-10, Cys-24, and His-27. The region spanning 5–64 is the CHORD 1 domain; the sequence is CYNKGCGQHFDPNTNLPDSCRYHPGVPIFHDALKGWSCCRKRTVDFSEFLNIKGCTVGLH. The SH3-binding motif lies at 28-31; the sequence is PGVP. Positions 42, 43, 59, and 64 each coordinate Zn(2+). The SH3-binding signature appears at 70–79; the sequence is PEVPPQPEGP. Residues 72-92 are disordered; it reads VPPQPEGPATSSLQEQKPLNT. Residues 80–92 show a composition bias toward polar residues; it reads ATSSLQEQKPLNT. Zn(2+) is bound by residues Cys-150 and Cys-155. The CHORD 2 domain occupies 150–209; sequence CQNPGCDAVYQGPESDATPCTYHPGAPRFHEGMKSWSCCGIQTLDFGAFLAQPGCRVGRH. Residues 159–162 carry the SH2-binding motif; sequence YQGP. Positions 169 and 172 each coordinate Zn(2+). Residues 173 to 176 carry the SH3-binding motif; that stretch reads PGAP. The Zn(2+) site is built by Cys-187, Cys-188, Cys-204, and His-209. The CS domain maps to 216–305; sequence PASCRHDWHQ…ADPGSWAQLE (90 aa). The SH2-binding motif lies at 235 to 238; sequence YGQI. The tract at residues 317–350 is disordered; it reads GVLLEMDEEESEDSDDDLSWTEEEDEEEEEAMGE. A compositionally biased stretch (acidic residues) spans 321-350; that stretch reads EMDEEESEDSDDDLSWTEEEDEEEEEAMGE.

As to quaternary structure, interacts with beta-1 integrin subunit. This interaction is regulated by divalent cations, and it occurs only in absence of calcium. As to expression, expressed in skeletal and cardiac muscles but not in other tissues. Is localized in rows flanking the Z line containing alpha-actinin.

Its function is as follows. May play a role during maturation and/or organization of muscles cells. The polypeptide is Integrin beta-1-binding protein 2 (Itgb1bp2) (Mus musculus (Mouse)).